The chain runs to 202 residues: Holliday junction resolvase RecU (202 aa).

The Mg(2+) site is built by threonine 85, aspartate 87, glutamate 100, and glutamine 119.

Belongs to the RecU family. It depends on Mg(2+) as a cofactor.

It is found in the cytoplasm. The catalysed reaction is Endonucleolytic cleavage at a junction such as a reciprocal single-stranded crossover between two homologous DNA duplexes (Holliday junction).. In terms of biological role, endonuclease that resolves Holliday junction intermediates in genetic recombination. Cleaves mobile four-strand junctions by introducing symmetrical nicks in paired strands. Promotes annealing of linear ssDNA with homologous dsDNA. Required for DNA repair, homologous recombination and chromosome segregation. The sequence is that of Holliday junction resolvase RecU from Streptococcus pyogenes serotype M5 (strain Manfredo).